The chain runs to 450 residues: Phosphoglucosamine mutase (450 aa).

Catalysis depends on Ser-101, which acts as the Phosphoserine intermediate. Residues Ser-101, Asp-240, Asp-242, and Asp-244 each contribute to the Mg(2+) site. Ser-101 carries the phosphoserine modification.

Belongs to the phosphohexose mutase family. The cofactor is Mg(2+). Post-translationally, activated by phosphorylation.

It catalyses the reaction alpha-D-glucosamine 1-phosphate = D-glucosamine 6-phosphate. Catalyzes the conversion of glucosamine-6-phosphate to glucosamine-1-phosphate. This is Phosphoglucosamine mutase from Streptococcus pneumoniae serotype 19F (strain G54).